Here is a 487-residue protein sequence, read N- to C-terminus: MKNAIVIGAGIGGLAAALRLRHQGYSVTIFEKNDYAGGKLHAIEKDGYRFDLGPSLFTLPHLVENLFALFPEEIIDFGYKSKAISFHYFWDDGTLFKASTDSSQFIEDASKVFKEEKSTIKKYLAKSKSKYELTKSLFLEKSLHKATTYFSLDTVKAIVHAPFLGLNNTLNDENSKFKNPKLTQLFNRYATYNGSSPYQTPGIMTMIPHLELGLGTYYPDGGMHRISQSLFELAQKVGVKFRFRESVTNITTSKNKVTGVETKNGSYLSDLVVSNMDIVPTYRNLMKDVPAPEKTLSQERSSSALIFYWGIDREFPELDLHNILFSEDYKTEFEHIFEHKTLAQDPTVYINITSKESSNDAPAGHENWFVMINAPGDYGQDWEQLVEESKKQIIAKIKKCLHVDISKHITTEYILTPQGIEKNTSSYRGALYGAASNNKFAAFLRHPNFNGKIKNLYHVGGSVHPGGGIPLCLLSAQITADLIQKEQ.

Residues glycine 12, glutamate 31, lysine 39, 55–56 (SL), valine 247, asparagine 275, leucine 431, glycine 461, and 468–469 (GI) each bind FAD.

Belongs to the carotenoid/retinoid oxidoreductase family. Monomer.

It carries out the reaction rhodopin + A = (3E)-3,4-didehydrorhodopin + AH2. The enzyme catalyses 1'-hydroxy-gamma-carotene + A = 1'-hydroxytorulene + AH2. The catalysed reaction is 1-hydroxy-all-trans-1,2-dihydro-neurosporene + A = demethylspheroidene + AH2. It catalyses the reaction 1,1'-dihydroxy-1,1',2,2'-tetrahydroneurosporene + A = 1'-hydroxy-demethylspheroidene + AH2. It carries out the reaction 1,1'-dihydroxy-1,1',2,2'-tetrahydrolycopene + A = 1,1'-dihydroxy-3,4-didehydro-1,2-dihydrolycopene + AH2. It functions in the pathway carotenoid biosynthesis. In terms of biological role, catalyzes the introduction of a C-3,4 double bond into 1'-hydroxy-gamma-carotene and rhodopin (1-hydroxylycopene) to yield 1'-hydroxytorulene and (3E)-3,4-didehydrorhodopin, respectively. Can also use 1-hydroxy-all-trans-1,2-dihydro-neurosporene, 1,1'-dihydroxy-1,1',2,2'-tetrahydroneurosporene and 1,1'-dihydroxy-1,1',2,2'-tetrahydrolycopene. Probably involved in the synthesis of myxol, a gamma-carotene derivative. May use FAD as a proton acceptor. The polypeptide is 1-hydroxycarotenoid 3,4-desaturase (Nonlabens dokdonensis (strain DSM 17205 / KCTC 12402 / DSW-6) (Donghaeana dokdonensis)).